The chain runs to 139 residues: Putative pre-16S rRNA nuclease (139 aa).

This sequence belongs to the YqgF nuclease family.

It localises to the cytoplasm. In terms of biological role, could be a nuclease involved in processing of the 5'-end of pre-16S rRNA. This chain is Putative pre-16S rRNA nuclease, found in Legionella pneumophila (strain Lens).